Here is a 397-residue protein sequence, read N- to C-terminus: tRNA pseudouridine synthase D (397 aa).

D76 acts as the Nucleophile in catalysis. One can recognise a TRUD domain in the interval 151–361 (GVPNFFGEQR…MEGERRPLRV (211 aa)).

It belongs to the pseudouridine synthase TruD family.

The catalysed reaction is uridine(13) in tRNA = pseudouridine(13) in tRNA. Its function is as follows. Responsible for synthesis of pseudouridine from uracil-13 in transfer RNAs. This is tRNA pseudouridine synthase D from Geotalea daltonii (strain DSM 22248 / JCM 15807 / FRC-32) (Geobacter daltonii).